Here is a 379-residue protein sequence, read N- to C-terminus: Deoxyhypusine synthase (379 aa).

NAD(+) contacts are provided by residues 104–108 (SNLVS), 130–132 (TAG), Glu-136, and Asp-237. Residue 135–136 (EE) coordinates spermidine. Asp-242 contributes to the spermidine binding site. Gly-293 is a binding site for NAD(+). His-298 contacts spermidine. Position 318–319 (318–319 (TA)) interacts with NAD(+). Spermidine is bound by residues 324–326 (GSD) and 333–339 (EAVSWGK). The Nucleophile role is filled by Lys-339. 352-353 (DA) is an NAD(+) binding site.

It belongs to the deoxyhypusine synthase family. In terms of assembly, homotetramer. NAD(+) is required as a cofactor.

The catalysed reaction is [eIF5A protein]-L-lysine + spermidine = [eIF5A protein]-deoxyhypusine + propane-1,3-diamine. It participates in protein modification; eIF5A hypusination. Functionally, catalyzes the NAD-dependent oxidative cleavage of spermidine and the subsequent transfer of the butylamine moiety of spermidine to the epsilon-amino group of a specific lysine residue of the eIF-5A precursor protein to form the intermediate deoxyhypusine residue. Also able to produce homospermidine from putrescine. In Nicotiana tabacum (Common tobacco), this protein is Deoxyhypusine synthase (DHS1).